The primary structure comprises 159 residues: Transcription elongation factor GreA (159 aa).

Residues 47–73 (AEYDAAREEQSLTEAHIADLENKLSTA) adopt a coiled-coil conformation.

The protein belongs to the GreA/GreB family.

Necessary for efficient RNA polymerase transcription elongation past template-encoded arresting sites. The arresting sites in DNA have the property of trapping a certain fraction of elongating RNA polymerases that pass through, resulting in locked ternary complexes. Cleavage of the nascent transcript by cleavage factors such as GreA or GreB allows the resumption of elongation from the new 3'terminus. GreA releases sequences of 2 to 3 nucleotides. The polypeptide is Transcription elongation factor GreA (Chlorobium phaeobacteroides (strain DSM 266 / SMG 266 / 2430)).